We begin with the raw amino-acid sequence, 296 residues long: Probable alpha-L-glutamate ligase (296 aa).

In terms of domain architecture, ATP-grasp spans 104–287 (LQLLARQGID…IATLMITFIE (184 aa)). ATP-binding positions include Lys-141, 178 to 179 (EF), Asp-187, and 211 to 213 (RSN). Mg(2+)-binding residues include Asp-248, Glu-260, and Asn-262. Mn(2+) contacts are provided by Asp-248, Glu-260, and Asn-262.

The protein belongs to the RimK family. Mg(2+) is required as a cofactor. The cofactor is Mn(2+).

This chain is Probable alpha-L-glutamate ligase, found in Sodalis glossinidius (strain morsitans).